The sequence spans 306 residues: Protein STPG3 (306 aa).

The segment at 210–230 (CSYTPLLPTSKPSGEKRPSPN) is disordered.

The chain is Protein STPG3 from Mus musculus (Mouse).